The primary structure comprises 87 residues: Selenoprotein W (87 aa).

The cysteinyl-selenocysteine (Cys-Sec); redox-active cross-link spans cysteine 10 to selenocysteine 13. Residue selenocysteine 13 is a non-standard amino acid, selenocysteine. An S-glutathionyl cysteine modification is found at cysteine 37.

Belongs to the SelWTH family. Selenoprotein W subfamily. In terms of assembly, interacts with DPYSL2, PRDX1, YWHAB, YWHAG, HSP70 and HSP90. As to expression, highest levels detected in skeletal muscle, tongue, heart and brain. Expressed at significantly higher levels in female skeletal muscle than in male and at slightly higher levels in female cardiac muscle than in male (at protein level). Also detected at low levels in liver.

It is found in the cytoplasm. Its function is as follows. Plays a role as a glutathione (GSH)-dependent antioxidant. May be involved in a redox-related process. May play a role in the myopathies of selenium deficiency. The chain is Selenoprotein W from Macaca mulatta (Rhesus macaque).